Here is a 435-residue protein sequence, read N- to C-terminus: 5-methylthioadenosine/S-adenosylhomocysteine deaminase (435 aa).

Zn(2+)-binding residues include histidine 65 and histidine 67. Substrate-binding residues include glutamate 94, arginine 150, and histidine 189. Position 216 (histidine 216) interacts with Zn(2+). Substrate is bound by residues glutamate 219 and aspartate 304. Aspartate 304 serves as a coordination point for Zn(2+).

Belongs to the metallo-dependent hydrolases superfamily. MTA/SAH deaminase family. The cofactor is Zn(2+).

It carries out the reaction S-adenosyl-L-homocysteine + H2O + H(+) = S-inosyl-L-homocysteine + NH4(+). The catalysed reaction is S-methyl-5'-thioadenosine + H2O + H(+) = S-methyl-5'-thioinosine + NH4(+). In terms of biological role, catalyzes the deamination of 5-methylthioadenosine and S-adenosyl-L-homocysteine into 5-methylthioinosine and S-inosyl-L-homocysteine, respectively. Is also able to deaminate adenosine. The chain is 5-methylthioadenosine/S-adenosylhomocysteine deaminase from Bacillus cereus (strain ZK / E33L).